The primary structure comprises 433 residues: Eukaryotic translation initiation factor 3 subunit E (433 aa).

A PCI domain is found at 217-390 (FFNHGKGRDL…GHVVMGTQPL (174 aa)).

The protein belongs to the eIF-3 subunit E family. As to quaternary structure, component of the eukaryotic translation initiation factor 3 (eIF-3) complex.

It localises to the cytoplasm. Functionally, component of the eukaryotic translation initiation factor 3 (eIF-3) complex, which is involved in protein synthesis of a specialized repertoire of mRNAs and, together with other initiation factors, stimulates binding of mRNA and methionyl-tRNAi to the 40S ribosome. The eIF-3 complex specifically targets and initiates translation of a subset of mRNAs involved in cell proliferation. This is Eukaryotic translation initiation factor 3 subunit E (eIF3-S6) from Anopheles gambiae (African malaria mosquito).